A 78-amino-acid polypeptide reads, in one-letter code: HssA/B-like protein 30 (78 aa).

The tract at residues 1-32 (MTLFSSITSISKTNTSSKSSVNSLSGSSLSMG) is disordered.

The protein belongs to the hssA/B family.

In Dictyostelium discoideum (Social amoeba), this protein is HssA/B-like protein 30 (hssl30).